The sequence spans 142 residues: Hemoglobin subunit theta-1 (142 aa).

Positions 2–142 (ALSAEDRALV…VISALASEYR (141 aa)) constitute a Globin domain. Positions 59 and 88 each coordinate heme b.

This sequence belongs to the globin family.

The protein is Hemoglobin subunit theta-1 (HBQ1) of Pongo pygmaeus (Bornean orangutan).